Consider the following 308-residue polypeptide: Serpentine receptor class V-1 (308 aa).

Transmembrane regions (helical) follow at residues 15 to 35 (VSTA…YILF), 46 to 68 (PFFR…STFF), 88 to 108 (VVPI…IIFI), 135 to 155 (LLLI…STDF), 184 to 204 (AMVD…AIFI), 222 to 242 (LALS…CSLL), and 256 to 276 (TMWF…LLAL).

Belongs to the nematode receptor-like protein srv family.

The protein resides in the membrane. This is Serpentine receptor class V-1 (srv-1) from Caenorhabditis elegans.